Reading from the N-terminus, the 127-residue chain is Large ribosomal subunit protein bL17 (127 aa).

This sequence belongs to the bacterial ribosomal protein bL17 family. As to quaternary structure, part of the 50S ribosomal subunit. Contacts protein L32.

The chain is Large ribosomal subunit protein bL17 from Pediococcus pentosaceus (strain ATCC 25745 / CCUG 21536 / LMG 10740 / 183-1w).